A 392-amino-acid chain; its full sequence is Phosphoglycerate kinase (392 aa).

Residues Asp-21–Asn-23, Arg-36, His-59–Arg-62, Arg-113, and Arg-146 contribute to the substrate site. Residues Lys-197, Glu-319, and Gly-345 to Thr-348 contribute to the ATP site.

Belongs to the phosphoglycerate kinase family. As to quaternary structure, monomer.

It localises to the cytoplasm. The catalysed reaction is (2R)-3-phosphoglycerate + ATP = (2R)-3-phospho-glyceroyl phosphate + ADP. The protein operates within carbohydrate degradation; glycolysis; pyruvate from D-glyceraldehyde 3-phosphate: step 2/5. The protein is Phosphoglycerate kinase of Nitrosococcus oceani (strain ATCC 19707 / BCRC 17464 / JCM 30415 / NCIMB 11848 / C-107).